The sequence spans 129 residues: MAKYLAQIIVMGAQVVGRAFARALRQEFAASQAAAEARGQAGRQSAAASSFTGMTLQEAQQILNISTLTPEEIQKNYEHLFKVNDKAVGGSFYIQSKVVRAKERLDEELSINQQQQTKNKHADEQQQQT.

Positions E58–S110 are J-like. The interval S110–T129 is disordered. Positions K120 to T129 are enriched in basic and acidic residues.

The protein belongs to the TIM16/PAM16 family. In terms of assembly, probable component of the PAM complex at least composed of a mitochondrial HSP70 protein, GRPE, TIMM44, TIMM16/PAM16 and TIMM14. Associates with the TIM23 complex.

It localises to the mitochondrion inner membrane. Its function is as follows. Regulates ATP-dependent protein translocation into the mitochondrial matrix. This Danio rerio (Zebrafish) protein is Mitochondrial import inner membrane translocase subunit tim16 (pam16).